A 473-amino-acid chain; its full sequence is ATP synthase subunit beta (473 aa).

153-160 is a binding site for ATP; sequence GGAGVGKT.

This sequence belongs to the ATPase alpha/beta chains family. F-type ATPases have 2 components, CF(1) - the catalytic core - and CF(0) - the membrane proton channel. CF(1) has five subunits: alpha(3), beta(3), gamma(1), delta(1), epsilon(1). CF(0) has three main subunits: a(1), b(2) and c(9-12). The alpha and beta chains form an alternating ring which encloses part of the gamma chain. CF(1) is attached to CF(0) by a central stalk formed by the gamma and epsilon chains, while a peripheral stalk is formed by the delta and b chains.

The protein localises to the cell inner membrane. The enzyme catalyses ATP + H2O + 4 H(+)(in) = ADP + phosphate + 5 H(+)(out). Its function is as follows. Produces ATP from ADP in the presence of a proton gradient across the membrane. The catalytic sites are hosted primarily by the beta subunits. In Rickettsia bellii (strain RML369-C), this protein is ATP synthase subunit beta.